Here is a 2419-residue protein sequence, read N- to C-terminus: Telomere-associated protein RIF1 (2419 aa).

Disordered stretches follow at residues 1 to 24 (MTAP…VPPG) and 373 to 408 (SIPS…SPRG). Residues 373 to 385 (SIPSPQGNSSRGS) show a composition bias toward polar residues. 5 positions are modified to phosphoserine: serine 385, serine 391, serine 779, serine 976, and serine 1005. Residue threonine 1044 is modified to Phosphothreonine. A compositionally biased stretch (low complexity) spans 1184 to 1198 (SSSTETSVVSSSSVS). 2 disordered regions span residues 1184-1594 (SSST…QAVP) and 1613-1637 (RVIL…EKSK). 2 stretches are compositionally biased toward polar residues: residues 1199 to 1217 (NATF…QTFI) and 1228 to 1255 (RPFS…TNTD). Position 1215 is a phosphothreonine (threonine 1215). A phosphoserine mark is found at serine 1231 and serine 1233. The segment covering 1263-1272 (REVTNSKSDS) has biased composition (basic and acidic residues). Residues 1289–1302 (AEQSVTKKSKPSLT) show a composition bias toward polar residues. Over residues 1323-1345 (HVSENDDHPSEATLEHKDGDPKP) the composition is skewed to basic and acidic residues. 4 positions are modified to phosphoserine: serine 1407, serine 1439, serine 1457, and serine 1498. A compositionally biased stretch (basic and acidic residues) spans 1416–1455 (SQERESGQQKKERRKEEEKIISKSPLRIKDDKLPTQKLTD). Residues 1457–1467 (SPIQENLTEKG) are compositionally biased toward polar residues. Threonine 1504 carries the phosphothreonine modification. Residues 1507–1516 (NLDKSSEKPL) show a composition bias toward basic and acidic residues. Over residues 1525–1537 (RRASQGLISAVEN) the composition is skewed to polar residues. Residues serine 1528, serine 1538, serine 1540, serine 1542, and serine 1550 each carry the phosphoserine modification. Residues 1551–1560 (RKKRSGKWKN) are compositionally biased toward basic residues. 2 positions are modified to phosphoserine: serine 1562 and serine 1565. The span at 1572–1581 (EEKKAEEEVM) shows a compositional bias: basic and acidic residues. 2 positions are modified to phosphoserine: serine 1680 and serine 1683. Threonine 1780 is subject to Phosphothreonine. At serine 1784 the chain carries Phosphoserine. A disordered region spans residues 1812–1836 (ASEAVSEIQGPCSENHSPAEDPGLS). Serine 1842 is modified (phosphoserine). Positions 1882 to 2419 (DAFVAADSEK…RWRSPAHENS (538 aa)) are interaction with condensed chromosomes in telophase. Disordered regions lie at residues 1890–1914 (EKST…ECEA) and 1929–1983 (FNSG…AQMS). 12 positions are modified to phosphoserine: serine 1931, serine 2094, serine 2109, serine 2121, serine 2125, serine 2144, serine 2153, serine 2208, serine 2287, serine 2341, serine 2413, and serine 2419. An interaction with ERCC6 region spans residues 2119–2394 (VWSPLASPST…TGSQLFEMHE (276 aa)). A disordered region spans residues 2182–2212 (SPIIKSVKTSPTSHSKHNTTSAKGFLSPGSQ). The segment covering 2189 to 2212 (KTSPTSHSKHNTTSAKGFLSPGSQ) has biased composition (polar residues).

This sequence belongs to the RIF1 family. Interacts with TP53BP1 (when phosphorylated by ATM). May interact with TRF2. Interacts with SHLD2. Interacts with ERCC6 (via WHD region). Interacts with ASTE1. In terms of tissue distribution, expressed in Sertoli cells, prospermatagonia, early primary spermatocytes, and in oocytes at all stages of their growth. Expressed in embryonic stem (ES) and embryonic germ (EG) cells: expression is lost upon differentiation.

It localises to the nucleus. The protein localises to the chromosome. Its subcellular location is the telomere. The protein resides in the cytoplasm. It is found in the cytoskeleton. It localises to the spindle. Its function is as follows. Key regulator of TP53BP1 that plays a key role in the repair of double-strand DNA breaks (DSBs) in response to DNA damage: acts by promoting non-homologous end joining (NHEJ)-mediated repair of DSBs. In response to DNA damage, interacts with ATM-phosphorylated TP53BP1. Interaction with TP53BP1 leads to dissociate the interaction between NUDT16L1/TIRR and TP53BP1, thereby unmasking the tandem Tudor-like domain of TP53BP1 and allowing recruitment to DNA DSBs. Once recruited to DSBs, RIF1 and TP53BP1 act by promoting NHEJ-mediated repair of DSBs. In the same time, RIF1 and TP53BP1 specifically counteract the function of BRCA1 by blocking DSBs resection via homologous recombination (HR) during G1 phase. Also required for immunoglobulin class-switch recombination (CSR) during antibody genesis, a process that involves the generation of DNA DSBs. Promotes NHEJ of dysfunctional telomeres. This Mus musculus (Mouse) protein is Telomere-associated protein RIF1.